Here is a 229-residue protein sequence, read N- to C-terminus: uncharacterized protein (229 aa).

This is an uncharacterized protein from Dictyostelium discoideum (Social amoeba).